The following is a 361-amino-acid chain: Adenosine kinase (361 aa).

A Nuclear localization signal motif is present at residues 7-15; the sequence is PKPKKLKVE. An adenosine-binding site is contributed by Asp34. Residue Ser48 coordinates Mg(2+). Tyr76 bears the Phosphotyrosine mark. Asn147 lines the Mg(2+) pocket. Residue Gln305 participates in adenosine binding. Residue Asp316 is part of the active site. Asp316 serves as the catalytic Proton acceptor.

It belongs to the carbohydrate kinase PfkB family. Monomer. The cofactor is Mg(2+). Widely expressed. Highly expressed in liver, testis, kidney and spleen (at protein level). In brain, expression in most forebrain structures and the cerebellum is higher than in the midbrain and brainstem (at protein level). In terms of tissue distribution, major isoform in testis and kidney. Not detected in most brain regions, except in the cerebellum, where it is expressed at a similar level to that of isoform 2 (at protein level). As to expression, major isoform in spleen and in most brain regions, except in the cerebellum, where it is expressed at a similar level to that of isoform 1 (at protein level).

Its subcellular location is the nucleus. The protein localises to the cytoplasm. It catalyses the reaction adenosine + ATP = AMP + ADP + H(+). The protein operates within purine metabolism; AMP biosynthesis via salvage pathway; AMP from adenosine: step 1/1. With respect to regulation, activity is inhibited by 5-iodotubercidin and 5'-amino-5'-deoxyadenosine. Functionally, catalyzes the phosphorylation of the purine nucleoside adenosine at the 5' position in an ATP-dependent manner. Serves as a potential regulator of concentrations of extracellular adenosine and intracellular adenine nucleotides. The polypeptide is Adenosine kinase (Adk) (Mus musculus (Mouse)).